Here is a 199-residue protein sequence, read N- to C-terminus: 5'-deoxynucleotidase HDDC2 (199 aa).

Ala2 carries the N-acetylalanine modification. Ser5 is subject to Phosphoserine. An HD domain is found at 41 to 143 (VSDHMYRMAV…VKQLDQCEMI (103 aa)). Positions 44, 72, 73, 76, 81, 82, and 138 each coordinate a divalent metal cation. Ser199 is modified (phosphoserine).

It belongs to the HDDC2 family. As to quaternary structure, homodimer. It depends on Mn(2+) as a cofactor. Co(2+) is required as a cofactor. The cofactor is Mg(2+).

The catalysed reaction is a 2'-deoxyribonucleoside 5'-phosphate + H2O = a 2'-deoxyribonucleoside + phosphate. Functionally, catalyzes the dephosphorylation of the nucleoside 5'-monophosphates deoxyadenosine monophosphate (dAMP), deoxycytidine monophosphate (dCMP), deoxyguanosine monophosphate (dGMP) and deoxythymidine monophosphate (dTMP). This Mus musculus (Mouse) protein is 5'-deoxynucleotidase HDDC2 (Hddc2).